The primary structure comprises 678 residues: Pescadillo homolog (678 aa).

Residues Glu283 to Pro303 show a composition bias toward acidic residues. The segment at Glu283 to Ala316 is disordered. A BRCT domain is found at Val361–Pro451. Residues Met552–Thr587 adopt a coiled-coil conformation. A disordered region spans residues Met563 to Arg678. Basic and acidic residues predominate over residues Lys564–Lys581. 2 stretches are compositionally biased toward low complexity: residues Lys597–Ser618 and Ala630–Glu661. Residues Ala662–Pro672 show a composition bias toward basic and acidic residues.

The protein belongs to the pescadillo family.

The protein resides in the nucleus. The protein localises to the nucleolus. Its subcellular location is the nucleoplasm. Its function is as follows. Required for maturation of ribosomal RNAs and formation of the large ribosomal subunit. The chain is Pescadillo homolog from Chlamydomonas reinhardtii (Chlamydomonas smithii).